We begin with the raw amino-acid sequence, 371 residues long: 4-hydroxy-3-methylbut-2-en-1-yl diphosphate synthase (flavodoxin) (371 aa).

[4Fe-4S] cluster is bound by residues cysteine 270, cysteine 273, cysteine 305, and glutamate 312.

It belongs to the IspG family. Requires [4Fe-4S] cluster as cofactor.

The catalysed reaction is (2E)-4-hydroxy-3-methylbut-2-enyl diphosphate + oxidized [flavodoxin] + H2O + 2 H(+) = 2-C-methyl-D-erythritol 2,4-cyclic diphosphate + reduced [flavodoxin]. It functions in the pathway isoprenoid biosynthesis; isopentenyl diphosphate biosynthesis via DXP pathway; isopentenyl diphosphate from 1-deoxy-D-xylulose 5-phosphate: step 5/6. Its function is as follows. Converts 2C-methyl-D-erythritol 2,4-cyclodiphosphate (ME-2,4cPP) into 1-hydroxy-2-methyl-2-(E)-butenyl 4-diphosphate. The protein is 4-hydroxy-3-methylbut-2-en-1-yl diphosphate synthase (flavodoxin) of Shewanella baltica (strain OS223).